We begin with the raw amino-acid sequence, 156 residues long: Small ribosomal subunit protein uS7c (156 aa).

This sequence belongs to the universal ribosomal protein uS7 family. Part of the 30S ribosomal subunit.

The protein localises to the plastid. It is found in the chloroplast. One of the primary rRNA binding proteins, it binds directly to 16S rRNA where it nucleates assembly of the head domain of the 30S subunit. This is Small ribosomal subunit protein uS7c (rps7) from Porphyra purpurea (Red seaweed).